A 401-amino-acid chain; its full sequence is Tumor necrosis factor receptor superfamily member 11B (401 aa).

Residues 1–21 (MNKWLCCALLVFLDIIEWTTQ) form the signal peptide. TNFR-Cys repeat units lie at residues 24–62 (FPPK…KTLC), 65–105 (CPDY…NRVC), 107–142 (CEEG…NTVC), and 145–185 (CPDG…DNVC). 8 cysteine pairs are disulfide-bonded: cysteine 41–cysteine 54, cysteine 44–cysteine 62, cysteine 65–cysteine 80, cysteine 83–cysteine 97, cysteine 87–cysteine 105, cysteine 107–cysteine 118, cysteine 124–cysteine 142, and cysteine 145–cysteine 160. Asparagine 98 carries an N-linked (GlcNAc...) asparagine glycan. N-linked (GlcNAc...) asparagine glycans are attached at residues asparagine 165 and asparagine 178. Cysteine 166 and cysteine 185 form a disulfide bridge. 2 Death domains span residues 198–269 (DVTL…MVKK) and 270–365 (IIQD…THSL). N-linked (GlcNAc...) asparagine glycosylation is present at asparagine 289.

In terms of assembly, homodimer. Interacts with TNFSF10 and TNFSF11.

The protein resides in the secreted. In terms of biological role, acts as a decoy receptor for TNFSF11/RANKL and thereby neutralizes its function in osteoclastogenesis. Inhibits the activation of osteoclasts and promotes osteoclast apoptosis in vitro. Bone homeostasis seems to depend on the local ratio between TNFSF11 and TNFRSF11B. May also play a role in preventing arterial calcification. May act as decoy receptor for TNFSF10/TRAIL and protect against apoptosis. TNFSF10/TRAIL binding blocks the inhibition of osteoclastogenesis. This Rattus norvegicus (Rat) protein is Tumor necrosis factor receptor superfamily member 11B (Tnfrsf11b).